We begin with the raw amino-acid sequence, 347 residues long: UDP-N-acetylenolpyruvoylglucosamine reductase (347 aa).

Residues 24-195 (FDARARVAAR…VAVTFRLPKA (172 aa)) enclose the FAD-binding PCMH-type domain. The active site involves Arg171. Residue Ser247 is the Proton donor of the active site. Residue Glu343 is part of the active site.

Belongs to the MurB family. It depends on FAD as a cofactor.

It localises to the cytoplasm. It catalyses the reaction UDP-N-acetyl-alpha-D-muramate + NADP(+) = UDP-N-acetyl-3-O-(1-carboxyvinyl)-alpha-D-glucosamine + NADPH + H(+). Its pathway is cell wall biogenesis; peptidoglycan biosynthesis. In terms of biological role, cell wall formation. This is UDP-N-acetylenolpyruvoylglucosamine reductase from Burkholderia mallei (strain NCTC 10247).